The primary structure comprises 428 residues: Enolase (428 aa).

Glutamine 164 lines the (2R)-2-phosphoglycerate pocket. Glutamate 208 serves as the catalytic Proton donor. Residues aspartate 245, glutamate 286, and aspartate 313 each coordinate Mg(2+). 4 residues coordinate (2R)-2-phosphoglycerate: lysine 338, arginine 367, serine 368, and lysine 389. Lysine 338 functions as the Proton acceptor in the catalytic mechanism.

This sequence belongs to the enolase family. It depends on Mg(2+) as a cofactor.

It localises to the cytoplasm. The protein resides in the secreted. The protein localises to the cell surface. The enzyme catalyses (2R)-2-phosphoglycerate = phosphoenolpyruvate + H2O. It functions in the pathway carbohydrate degradation; glycolysis; pyruvate from D-glyceraldehyde 3-phosphate: step 4/5. In terms of biological role, catalyzes the reversible conversion of 2-phosphoglycerate (2-PG) into phosphoenolpyruvate (PEP). It is essential for the degradation of carbohydrates via glycolysis. The sequence is that of Enolase from Pyrococcus abyssi (strain GE5 / Orsay).